The following is a 340-amino-acid chain: Protein arginine N-methyltransferase 1 (340 aa).

Residues 16-311 (KDYYFDSYSH…TCKPAEGNHR (296 aa)) form the SAM-dependent MTase PRMT-type domain. Phosphotyrosine is present on Tyr19. His29, Arg38, Gly62, Asp84, and Glu113 together coordinate S-adenosyl-L-methionine. Residues Glu128 and Glu137 contribute to the active site. A Phosphoserine modification is found at Ser176.

The protein belongs to the class I-like SAM-binding methyltransferase superfamily. Protein arginine N-methyltransferase family. As to quaternary structure, interacts with pab2.

It localises to the nucleus. It carries out the reaction L-arginyl-[protein] + S-adenosyl-L-methionine = N(omega)-methyl-L-arginyl-[protein] + S-adenosyl-L-homocysteine + H(+). It catalyses the reaction L-arginyl-[protein] + 2 S-adenosyl-L-methionine = N(omega),N(omega)-dimethyl-L-arginyl-[protein] + 2 S-adenosyl-L-homocysteine + 2 H(+). In terms of biological role, S-adenosyl-L-methionine-dependent protein-arginine N-methyltransferase that catalyzes both the mono- and asymmetric (type I) dimethylation of the guanidino nitrogens of arginine residues in target proteins. Asymmetrically dimethylates the polyadenylate-binding protein pab2, modulating pab2 oligomerization. In Schizosaccharomyces pombe (strain 972 / ATCC 24843) (Fission yeast), this protein is Protein arginine N-methyltransferase 1.